Reading from the N-terminus, the 483-residue chain is Regulatory protein ViaA (483 aa).

The protein belongs to the ViaA family. As to quaternary structure, homodimer. Interacts with RavA.

Its subcellular location is the cytoplasm. Functionally, component of the RavA-ViaA chaperone complex, which may act on the membrane to optimize the function of some of the respiratory chains. ViaA stimulates the ATPase activity of RavA. The protein is Regulatory protein ViaA of Escherichia fergusonii (strain ATCC 35469 / DSM 13698 / CCUG 18766 / IAM 14443 / JCM 21226 / LMG 7866 / NBRC 102419 / NCTC 12128 / CDC 0568-73).